A 521-amino-acid chain; its full sequence is Bifunctional purine biosynthesis protein PurH (521 aa).

One can recognise an MGS-like domain in the interval 1-145 (MIKQALISVS…KNHRDVTVVV (145 aa)).

The protein belongs to the PurH family.

The enzyme catalyses (6R)-10-formyltetrahydrofolate + 5-amino-1-(5-phospho-beta-D-ribosyl)imidazole-4-carboxamide = 5-formamido-1-(5-phospho-D-ribosyl)imidazole-4-carboxamide + (6S)-5,6,7,8-tetrahydrofolate. It catalyses the reaction IMP + H2O = 5-formamido-1-(5-phospho-D-ribosyl)imidazole-4-carboxamide. Its pathway is purine metabolism; IMP biosynthesis via de novo pathway; 5-formamido-1-(5-phospho-D-ribosyl)imidazole-4-carboxamide from 5-amino-1-(5-phospho-D-ribosyl)imidazole-4-carboxamide (10-formyl THF route): step 1/1. It functions in the pathway purine metabolism; IMP biosynthesis via de novo pathway; IMP from 5-formamido-1-(5-phospho-D-ribosyl)imidazole-4-carboxamide: step 1/1. This Burkholderia ambifaria (strain MC40-6) protein is Bifunctional purine biosynthesis protein PurH.